Consider the following 118-residue polypeptide: Large ribosomal subunit protein bL20 (118 aa).

It belongs to the bacterial ribosomal protein bL20 family.

Binds directly to 23S ribosomal RNA and is necessary for the in vitro assembly process of the 50S ribosomal subunit. It is not involved in the protein synthesizing functions of that subunit. This is Large ribosomal subunit protein bL20 from Klebsiella pneumoniae (strain 342).